Consider the following 132-residue polypeptide: MDKKSFYGLGRRKSSTAKVYLYQSKDKGKITINHRNPSDYFPNKLVIQDMEQPLELTKLKDNFDINVVVKGGGFTGQAGAIRLGIVRALIKFNPDLKKLLKTKKLTTRDKRAKERKKFGLYGARRAPQFTKR.

It belongs to the universal ribosomal protein uS9 family.

The polypeptide is Small ribosomal subunit protein uS9 (rpsI) (Mycoplasma genitalium (strain ATCC 33530 / DSM 19775 / NCTC 10195 / G37) (Mycoplasmoides genitalium)).